The following is an 88-amino-acid chain: Acylphosphatase (88 aa).

Positions 3 to 88 constitute an Acylphosphatase-like domain; that stretch reads AVDVLISGRV…RAGHQGFEVR (86 aa). Catalysis depends on residues arginine 18 and asparagine 36.

It belongs to the acylphosphatase family.

It catalyses the reaction an acyl phosphate + H2O = a carboxylate + phosphate + H(+). The chain is Acylphosphatase (acyP) from Methanocella arvoryzae (strain DSM 22066 / NBRC 105507 / MRE50).